Here is an 82-residue protein sequence, read N- to C-terminus: Small ribosomal subunit protein bS16 (82 aa).

It belongs to the bacterial ribosomal protein bS16 family.

The chain is Small ribosomal subunit protein bS16 from Edwardsiella ictaluri (strain 93-146).